The sequence spans 322 residues: Cysteine protease YopT (322 aa).

The segment at 43 to 72 (SHSNRQKKLSATIKHNQSSRSMLDRKLTSD) is disordered. Residues cysteine 139, histidine 258, and aspartate 274 contribute to the active site.

This sequence belongs to the peptidase C58 family. In terms of assembly, interacts with human ARHA.

The protein resides in the secreted. Its function is as follows. Cysteine protease, which is translocated into infected cells and plays a central role in pathogenesis by cleaving the C-terminus end of the human small GTPase RhoA/ARHA, a regulator of cytoskeleton. Once cleaved, ARHA loses its lipid modification, and is released from the cell membrane, leading to the subsequent disruption of actin cytoskeleton of the host cell. This is Cysteine protease YopT (yopT) from Yersinia enterocolitica.